Consider the following 339-residue polypeptide: MASAALIDADMAPTLQSILDQKTLRWIFVGGKGGVGKTTTSCSLAIQLAKHRKSVLLISTDPAHNLSDAFNQKFGKDARLVNGFDNLSAMEIDPNGSIQDLLASGAEEGQDPMAGLGGMGSMMQDLAFSIPGVDEAMSFAEVLKQVKSMSYEVIIFDTAPTGHTLRFLQFPTVMEKALSKVSQLSRQFGPMLNSFLGASGRLPNGQNMDELIEKMENLRETIGEVNGQFKDADLTTFVCVCIPEFLSLYETERMIQELNSYEIDTHSIVVNQLLFPKQDNPCEQCNARRKMQKKYLDQIEELYDEFNVVKMPLLVEEVRGKEKLEKFSEMLVKPFVPPQ.

32–39 (KGGVGKTT) is an ATP binding site. The active site involves D61. 2 residues coordinate ATP: E244 and N271. Zn(2+)-binding residues include C282 and C285.

Belongs to the arsA ATPase family. In terms of assembly, homodimer.

The protein resides in the cytoplasm. It is found in the endoplasmic reticulum. Its function is as follows. ATPase required for the post-translational delivery of tail-anchored (TA) proteins to the endoplasmic reticulum. Recognizes and selectively binds the transmembrane domain of TA proteins in the cytosol. This complex then targets to the endoplasmic reticulum by membrane-bound receptors, where the tail-anchored protein is released for insertion. This process is regulated by ATP binding and hydrolysis. ATP binding drives the homodimer towards the closed dimer state, facilitating recognition of newly synthesized TA membrane proteins. ATP hydrolysis is required for insertion. Subsequently, the homodimer reverts towards the open dimer state, lowering its affinity for the membrane-bound receptor, and returning it to the cytosol to initiate a new round of targeting. The chain is ATPase get3 (get3) from Pyrenophora tritici-repentis (strain Pt-1C-BFP) (Wheat tan spot fungus).